The sequence spans 608 residues: Lysophospholipase 2 (608 aa).

The first 17 residues, 1 to 17 (MLVWQSILLFLVGCVLS), serve as a signal peptide directing secretion. The region spanning 30 to 564 (QCPEGKLTRS…ENYCWDGTIY (535 aa)) is the PLA2c domain. Asparagine 259, asparagine 365, asparagine 450, asparagine 464, asparagine 491, and asparagine 572 each carry an N-linked (GlcNAc...) asparagine glycan.

The protein belongs to the lysophospholipase family.

The protein localises to the secreted. The catalysed reaction is a 1-acyl-sn-glycero-3-phosphocholine + H2O = sn-glycerol 3-phosphocholine + a fatty acid + H(+). Functionally, catalyzes the release of fatty acids from lysophospholipids. Phospholipase B may well contribute to pathogenicity by abetting the fungus in damaging and traversing host cell membranes, processes which likely increase the rapidity of disseminated infection. The polypeptide is Lysophospholipase 2 (PLB2) (Candida albicans (Yeast)).